Here is a 712-residue protein sequence, read N- to C-terminus: 1,4-alpha-glucan branching enzyme GlgB (712 aa).

Aspartate 397 (nucleophile) is an active-site residue. Residue glutamate 450 is the Proton donor of the active site.

Belongs to the glycosyl hydrolase 13 family. GlgB subfamily. Monomer.

The enzyme catalyses Transfers a segment of a (1-&gt;4)-alpha-D-glucan chain to a primary hydroxy group in a similar glucan chain.. Its pathway is glycan biosynthesis; glycogen biosynthesis. Catalyzes the formation of the alpha-1,6-glucosidic linkages in glycogen by scission of a 1,4-alpha-linked oligosaccharide from growing alpha-1,4-glucan chains and the subsequent attachment of the oligosaccharide to the alpha-1,6 position. The polypeptide is 1,4-alpha-glucan branching enzyme GlgB (Bradyrhizobium sp. (strain BTAi1 / ATCC BAA-1182)).